Here is a 313-residue protein sequence, read N- to C-terminus: Nucleotide-binding protein Swit_0399 (313 aa).

An ATP-binding site is contributed by 20 to 27 (GMSGSGKK). 73–76 (DSRT) is a GTP binding site. The disordered stretch occupies residues 289–313 (PTVRHRDLTRQKSNAEESTVPGVGS). Basic and acidic residues predominate over residues 292–303 (RHRDLTRQKSNA).

The protein belongs to the RapZ-like family.

In terms of biological role, displays ATPase and GTPase activities. The chain is Nucleotide-binding protein Swit_0399 from Rhizorhabdus wittichii (strain DSM 6014 / CCUG 31198 / JCM 15750 / NBRC 105917 / EY 4224 / RW1) (Sphingomonas wittichii).